A 133-amino-acid polypeptide reads, in one-letter code: Basic leucine zipper transcriptional factor ATF-like 3 (133 aa).

The tract at residues 1–68 is disordered; it reads MSQGPPAGGV…EHESLEQENS (68 aa). Phosphoserine occurs at positions 2 and 24. The span at 11–24 shows a compositional bias: polar residues; sequence LQSSVAAPGNQPQS. The region spanning 28-91 is the bZIP domain; that stretch reads DDRKVRRREK…RHLTEALKEH (64 aa). Residues 30-55 form a basic motif region; it reads RKVRRREKNRVAAQRSRKKQTQKSDK. Over residues 51–68 the composition is skewed to basic and acidic residues; the sequence is QKSDKLHEEHESLEQENS. The segment at 56-84 is leucine-zipper; sequence LHEEHESLEQENSVLRREIAKLKEELRHL.

The protein belongs to the bZIP family. As to quaternary structure, heterodimer; heterodimerizes with JUN family proteins. Interacts with JUN. Ubiquitously expressed.

The protein resides in the nucleus. Its function is as follows. AP-1 family transcription factor that controls the differentiation of CD8(+) thymic conventional dendritic cells in the immune system. Acts via the formation of a heterodimer with JUN family proteins that recognizes and binds DNA sequence 5'-TGA[CG]TCA-3' and regulates expression of target genes. Required for development of CD8-alpha(+) classical dendritic cells (cDCs) and related CD103(+) dendritic cells that cross-present antigens to CD8 T-cells and produce interleukin-12 (IL12) in response to pathogens. In Rattus norvegicus (Rat), this protein is Basic leucine zipper transcriptional factor ATF-like 3 (Batf3).